The following is a 419-amino-acid chain: L-rhamnose isomerase (419 aa).

3 residues coordinate Mn(2+): H262, D294, and D296.

It belongs to the rhamnose isomerase family. As to quaternary structure, homotetramer. The cofactor is Mn(2+).

The protein localises to the cytoplasm. The enzyme catalyses L-rhamnopyranose = L-rhamnulose. Its pathway is carbohydrate degradation; L-rhamnose degradation; glycerone phosphate from L-rhamnose: step 1/3. Catalyzes the interconversion of L-rhamnose and L-rhamnulose. This chain is L-rhamnose isomerase, found in Escherichia coli O9:H4 (strain HS).